Reading from the N-terminus, the 804-residue chain is E3 UFM1-protein ligase 1 homolog (804 aa).

Position 1 is an N-acetylmethionine (M1). The interval 397-483 (IHPSSKSSES…VKAQESNNII (87 aa)) is disordered. Over residues 400–409 (SSKSSESTES) the composition is skewed to low complexity. A compositionally biased stretch (basic and acidic residues) spans 463–475 (LDSKAGGKKESVK).

This sequence belongs to the UFL1 family.

In terms of biological role, E3 UFM1-protein ligase that mediates ufmylation of target proteins. The sequence is that of E3 UFM1-protein ligase 1 homolog from Arabidopsis thaliana (Mouse-ear cress).